We begin with the raw amino-acid sequence, 98 residues long: Putative protein adenylyltransferase MJ0126 (98 aa).

The GSX(10)DXD motif signature appears at 31–45; that stretch reads GSYARNEQTETSDID. Mg(2+)-binding residues include Asp43, Asp45, and Asp75.

The protein belongs to the MntA antitoxin family. Probably forms a complex with cognate toxin MJ0125. Mg(2+) is required as a cofactor.

It carries out the reaction L-tyrosyl-[protein] + ATP = O-(5'-adenylyl)-L-tyrosyl-[protein] + diphosphate. It catalyses the reaction O-(5'-adenylyl)-L-tyrosyl-[protein] + ATP = O-[5'-(adenylyl-(5'-&gt;3')-adenylyl)]-L-tyrosyl-[protein] + diphosphate. Functionally, probable antitoxin component of a putative type VII toxin-antitoxin (TA) system. Neutralizes cognate toxic MJ0125 by di-AMPylation. The chain is Putative protein adenylyltransferase MJ0126 from Methanocaldococcus jannaschii (strain ATCC 43067 / DSM 2661 / JAL-1 / JCM 10045 / NBRC 100440) (Methanococcus jannaschii).